The primary structure comprises 296 residues: uncharacterized protein (296 aa).

This is an uncharacterized protein from Magallana gigas (Pacific oyster).